A 2016-amino-acid polypeptide reads, in one-letter code: Sodium channel protein type 5 subunit alpha (2016 aa).

Topologically, residues 1 to 129 (MANFLLPRGT…IRRAAVKILV (129 aa)) are cytoplasmic. The interval 28–56 (MAEKQARGSTTLQESREGLPEEEAPRPQL) is disordered. A Phosphoserine modification is found at Ser-36. The residue at position 38 (Thr-38) is a Phosphothreonine. Positions 41–52 (ESREGLPEEEAP) are enriched in basic and acidic residues. An I repeat occupies 113 to 420 (VLSPFHPIRR…VVAMAYEEQN (308 aa)). Residues 130–149 (HSLFNMLIMCTILTNCVFMA) form a helical membrane-spanning segment. Residues 150-157 (QHDPPPWT) lie on the Extracellular side of the membrane. The chain crosses the membrane as a helical span at residues 158 to 179 (KYVEYTFTAIYTFESLVKILAR). The Cytoplasmic portion of the chain corresponds to 180–188 (GFCLHAFTF). Residues 189–209 (LRDPWNWLDFSVIIMAYTTEF) form a helical membrane-spanning segment. Residues 210–216 (VDLGNVS) are Extracellular-facing. N-linked (GlcNAc...) asparagine glycosylation is present at Asn-214. The helical transmembrane segment at 217–236 (ALRTFRVLRALKTISVISGL) threads the bilayer. Topologically, residues 237–249 (KTIVGALIQSVKK) are cytoplasmic. The helical transmembrane segment at 250–272 (LADVMVLTVFCLSVFALIGLQLF) threads the bilayer. The Extracellular segment spans residues 273 to 357 (MGNLRHKCVR…PDHGYTSFDS (85 aa)). The cysteines at positions 280 and 335 are disulfide-linked. Asn-283, Asn-288, Asn-291, Asn-318, and Asn-328 each carry an N-linked (GlcNAc...) asparagine glycan. An intramembrane region (pore-forming) is located at residues 358-378 (FAWAFLALFRLMTQDCWERLY). Over 379–386 (QQTLRSAG) the chain is Extracellular. The helical transmembrane segment at 387-413 (KIYMIFFMLVIFLGSFYLVNLILAVVA) threads the bilayer. Residues 414 to 719 (MAYEEQNQAT…VKLVVMDPFT (306 aa)) lie on the Cytoplasmic side of the membrane. Phosphoserine is present on residues Ser-457, Ser-460, Ser-483, and Ser-484. The tract at residues 461–591 (LEMSPLAPVN…APGHALHGKK (131 aa)) is disordered. At Thr-486 the chain carries Phosphothreonine. Residues 491-503 (EDRLPKSDSEDGP) are compositionally biased toward basic and acidic residues. Residues Ser-497 and Ser-510 each carry the phosphoserine modification. The span at 509–528 (LSLTRGLSRTSMKPRSSRGS) shows a compositional bias: polar residues. Residues Arg-513 and Arg-526 each carry the dimethylated arginine; alternate modification. 2 positions are modified to omega-N-methylarginine; alternate: Arg-513 and Arg-526. Ser-539, Ser-571, Ser-664, and Ser-667 each carry phosphoserine. The span at 570–580 (TSAQGQPSPGT) shows a compositional bias: polar residues. Arg-680 carries the post-translational modification Dimethylated arginine; alternate. An Omega-N-methylarginine; alternate modification is found at Arg-680. The stretch at 699–969 (CCPLWMSIKQ…QLALARIQRG (271 aa)) is one II repeat. Residues 720 to 737 (DLTITMCIVLNTLFMALE) traverse the membrane as a helical segment. Residues 738 to 746 (HYNMTSEFE) are Extracellular-facing. Asn-740 carries an N-linked (GlcNAc...) asparagine glycan. The helical transmembrane segment at 747 to 769 (EMLQVGNLVFTGIFTAEMTFKII) threads the bilayer. Residues 770–775 (ALDPYY) lie on the Cytoplasmic side of the membrane. The chain crosses the membrane as a helical span at residues 776-796 (YFQQGWNIFDSIIVILSLMEL). Residues 797–806 (GLSRMSNLSV) lie on the Extracellular side of the membrane. An N-linked (GlcNAc...) asparagine glycan is attached at Asn-803. A helical membrane pass occupies residues 807–821 (LRSFRLLRVFKLAKS). At 822-838 (WPTLNTLIKIIGNSVGA) the chain is on the cytoplasmic side. The chain crosses the membrane as a helical span at residues 839-860 (LGNLTLVLAIIVFIFAVVGMQL). At 861 to 884 (FGKNYSELRDSDSGLLPRWHMMDF) the chain is on the extracellular side. N-linked (GlcNAc...) asparagine glycosylation occurs at Asn-864. The pore-forming intramembrane region spans 885–903 (FHAFLIIFRILCGEWIETM). Residues 904 to 912 (WDCMEVSGQ) are Extracellular-facing. Cys-906 and Cys-915 are joined by a disulfide. The helical transmembrane segment at 913–941 (SLCLLVFLLVMVIGNLVVLNLFLALLLSS) threads the bilayer. Residues 942–1203 (FSADNLTAPD…LRKTCYHIVE (262 aa)) are Cytoplasmic-facing. Residues 1005–1141 (IATPYSPPPP…PEDSCSEGST (137 aa)) are disordered. Basic and acidic residues predominate over residues 1015 to 1030 (ETEKVPPTRKETRFEE). Low complexity predominate over residues 1033–1044 (QPGQGTPGDPEP). A compositionally biased stretch (acidic residues) spans 1054–1071 (SDTDDQEEDEENSLGTEE). Over residues 1096-1113 (SQVSATASSEAEASASQA) the composition is skewed to low complexity. The stretch at 1187-1501 (PGKVWWRLRK…KKYYNAMKKL (315 aa)) is one III repeat. Residues 1204-1225 (HSWFETFIIFMILLSSGALAFE) form a helical membrane-spanning segment. Over 1226-1236 (DIYLEERKTIK) the chain is Extracellular. The helical transmembrane segment at 1237 to 1259 (VLLEYADKMFTYVFVLEMLLKWV) threads the bilayer. The Cytoplasmic portion of the chain corresponds to 1260-1268 (AYGFKKYFT). The chain crosses the membrane as a helical span at residues 1269 to 1291 (NAWCWLDFLIVDVSLVSLVANTL). Over 1292–1297 (GFAEMG) the chain is Extracellular. Residues 1298–1317 (PIKSLRTLRALRPLRALSRF) form a helical membrane-spanning segment. The Cytoplasmic segment spans residues 1318 to 1330 (EGMRVVVNALVGA). The chain crosses the membrane as a helical span at residues 1331-1355 (IPSIMNVLLVCLIFWLIFSIMGVNL). The Extracellular portion of the chain corresponds to 1356–1400 (FAGKFGRCINQTEGDLPLNYTIVNNKSQCESLNLTGELYWTKVKV). 4 N-linked (GlcNAc...) asparagine glycosylation sites follow: Asn-1365, Asn-1374, Asn-1380, and Asn-1388. An intramembrane region (pore-forming) is located at residues 1401 to 1422 (NFDNVGAGYLALLQVATFKGWM). Over 1423-1445 (DIMYAAVDSRGYEEQPQWEYNLY) the chain is Extracellular. A helical transmembrane segment spans residues 1446-1470 (MYIYFVIFIIFGSFFTLNLFIGVII). The Cytoplasmic segment spans residues 1471–1528 (DNFNQQKKKLGGQDIFMTEEQKKYYNAMKKLGSKKPQKPIPRPLNKYQGFIFDIVTKQ). Residue Ser-1503 is modified to Phosphoserine; by PKC. An IV repeat occupies 1510 to 1807 (IPRPLNKYQG…WEKFDPEATQ (298 aa)). The chain crosses the membrane as a helical span at residues 1529 to 1547 (AFDVTIMFLICLNMVTMMV). At 1548–1558 (ETDDQSPEKIN) the chain is on the extracellular side. The chain crosses the membrane as a helical span at residues 1559–1580 (ILAKINLLFVAIFTGECIVKLA). The Cytoplasmic portion of the chain corresponds to 1581 to 1589 (ALRHYYFTN). Residues 1590–1612 (SWNIFDFVVVILSIVGTVLSDII) traverse the membrane as a helical segment. The Extracellular portion of the chain corresponds to 1613–1619 (QKYFFSP). Residues 1620 to 1640 (TLFRVIRLARIGRILRLIRGA) form a helical membrane-spanning segment. Residues 1641–1650 (KGIRTLLFAL) are Cytoplasmic-facing. The helical transmembrane segment at 1651–1679 (MMSLPALFNIGLLLFLVMFIYSIFGMANF) threads the bilayer. Topologically, residues 1680–1697 (AYVKWEAGIDDMFNFQTF) are extracellular. An intramembrane region (pore-forming) is located at residues 1698 to 1714 (ANSMLCLFQITTSAGWD). Over 1715–1745 (GLLSPILNTGPPYCDPTLPNSNGSRGDCGSP) the chain is Extracellular. Asn-1736 carries N-linked (GlcNAc...) asparagine glycosylation. The helical transmembrane segment at 1746 to 1771 (AVGILFFTTYIIISFLIVVNMYIAII) threads the bilayer. The Cytoplasmic portion of the chain corresponds to 1772 to 2016 (LENFSVATEE…SPDRDRESIV (245 aa)). Positions 1839-1901 (DLPMVSGDRI…ITTTLRRKHE (63 aa)) are interaction with FGF13. Positions 1901–1930 (EEVSAMVIQRAFRRHLLQRSLKHASFLFRQ) constitute an IQ domain. The span at 1959–1979 (PLGPPSSSSISSTSFPPSYDS) shows a compositional bias: low complexity. The interval 1959–2016 (PLGPPSSSSISSTSFPPSYDSVTRATSDNLQVRGSDYSHSEDLADFPPSPDRDRESIV) is disordered. Residues 1974-1977 (PPSY) are interaction with NEDD4, NEDD4L and WWP2. Residues 1981 to 1990 (TRATSDNLQV) show a composition bias toward polar residues.

This sequence belongs to the sodium channel (TC 1.A.1.10) family. Nav1.5/SCN5A subfamily. Cannot form the same regulatory interactions with beta subunits as other Navs do. Interacts with the PDZ domain of the syntrophin SNTA1, SNTB1 and SNTB2. Interacts with NEDD4, NEDD4L, WWP2 and GPD1L. Interacts with CALM. Interacts with FGF13; the interaction is direct and FGF13 may regulate SNC5A density at membranes and function. May also interact with FGF12 and FGF14. Interacts with TMEM233. Interacts with the spider Jingzhaotoxin-I (AC P83974, AC B1P1B7, AC B1P1B8). Interacts with ANK3. Interacts with PKP2 (via N-terminus). Interacts with XIRP2; the interaction is required for normal action potential configuration in the heart. Post-translationally, ubiquitinated by NEDD4L; which promotes its endocytosis. Does not seem to be ubiquitinated by NEDD4 or WWP2. Phosphorylation at Ser-1503 by PKC in a highly conserved cytoplasmic loop slows inactivation of the sodium channel and reduces peak sodium currents. Regulated through phosphorylation by CaMK2D. In terms of processing, lacks the cysteine which covalently binds the conotoxin GVIIJ. This cysteine (position 868) is speculated in other sodium channel subunits alpha to be implied in covalent binding with the sodium channel subunit beta-2 or beta-4. Post-translationally, N-glycosylated at Asn-318, probably hinders potential interaction with regulatory subunits. In terms of tissue distribution, found in jejunal circular smooth muscle cells (at protein level). Expressed in human atrial and ventricular cardiac muscle but not in adult skeletal muscle, brain, myometrium, liver, or spleen. Isoform 4 is expressed in brain.

It localises to the cell membrane. It is found in the cytoplasm. Its subcellular location is the perinuclear region. The protein resides in the sarcolemma. The protein localises to the T-tubule. It localises to the cell junction. It carries out the reaction Na(+)(in) = Na(+)(out). Its activity is regulated as follows. Channel inactivation is regulated by intracellular calcium levels. It is a tetrodotoxin-resistant voltage-gated Na(+) channel (Nav). Its function is as follows. Pore-forming subunit of Nav1.5, a voltage-gated sodium (Nav) channel that directly mediates the depolarizing phase of action potentials in excitable membranes. Navs, also called VGSCs (voltage-gated sodium channels) or VDSCs (voltage-dependent sodium channels), operate by switching between closed and open conformations depending on the voltage difference across the membrane. In the open conformation they allow Na(+) ions to selectively pass through the pore, along their electrochemical gradient. The influx of Na(+) ions provokes membrane depolarization, initiating the propagation of electrical signals throughout cells and tissues. Nav1.5 is the predominant sodium channel expressed in myocardial cells and it is responsible for the initial upstroke of the action potential in cardiac myocytes, thereby initiating the heartbeat. Required for normal electrical conduction including formation of the infranodal ventricular conduction system and normal action potential configuration, as a result of its interaction with XIRP2. The sequence is that of Sodium channel protein type 5 subunit alpha from Homo sapiens (Human).